A 757-amino-acid polypeptide reads, in one-letter code: Protein transport protein SEC23-2 (757 aa).

Residues Cys-56, Cys-61, Cys-80, and Cys-83 each coordinate Zn(2+).

It belongs to the SEC23/SEC24 family. SEC23 subfamily. In terms of assembly, the COPII coat is composed of at least 5 proteins: the SEC23/24 complex, the SEC13/31 complex, and the protein SAR1.

The protein localises to the cytoplasm. The protein resides in the cytoplasmic vesicle. It is found in the COPII-coated vesicle membrane. Its subcellular location is the endoplasmic reticulum membrane. It localises to the golgi apparatus membrane. Component of the coat protein complex II (COPII) which promotes the formation of transport vesicles from the endoplasmic reticulum (ER). The coat has two main functions, the physical deformation of the endoplasmic reticulum membrane into vesicles and the selection of cargo molecules. The polypeptide is Protein transport protein SEC23-2 (SEC232) (Candida glabrata (strain ATCC 2001 / BCRC 20586 / JCM 3761 / NBRC 0622 / NRRL Y-65 / CBS 138) (Yeast)).